The chain runs to 209 residues: Urease accessory protein UreG (209 aa).

18-25 (GPVGSGKT) is a GTP binding site.

Belongs to the SIMIBI class G3E GTPase family. UreG subfamily. As to quaternary structure, homodimer. UreD, UreF and UreG form a complex that acts as a GTP-hydrolysis-dependent molecular chaperone, activating the urease apoprotein by helping to assemble the nickel containing metallocenter of UreC. The UreE protein probably delivers the nickel.

The protein resides in the cytoplasm. Facilitates the functional incorporation of the urease nickel metallocenter. This process requires GTP hydrolysis, probably effectuated by UreG. The sequence is that of Urease accessory protein UreG from Cupriavidus necator (strain ATCC 17699 / DSM 428 / KCTC 22496 / NCIMB 10442 / H16 / Stanier 337) (Ralstonia eutropha).